Consider the following 93-residue polypeptide: Large ribosomal subunit protein uL23 (93 aa).

The protein belongs to the universal ribosomal protein uL23 family. As to quaternary structure, part of the 50S ribosomal subunit. Contacts protein L29, and trigger factor when it is bound to the ribosome.

Functionally, one of the early assembly proteins it binds 23S rRNA. One of the proteins that surrounds the polypeptide exit tunnel on the outside of the ribosome. Forms the main docking site for trigger factor binding to the ribosome. The protein is Large ribosomal subunit protein uL23 of Campylobacter hominis (strain ATCC BAA-381 / DSM 21671 / CCUG 45161 / LMG 19568 / NCTC 13146 / CH001A).